The following is a 357-amino-acid chain: Isopentenyl-diphosphate delta-isomerase (357 aa).

12–13 (RK) serves as a coordination point for substrate. FMN-binding positions include S70, 71–73 (SMT), S101, and N130. Residue 101–103 (SMR) coordinates substrate. Residue Q165 participates in substrate binding. Residue E166 coordinates Mg(2+). FMN-binding positions include K197, 289–291 (GIR), and 310–311 (AQ).

It belongs to the IPP isomerase type 2 family. In terms of assembly, homooctamer. Dimer of tetramers. The cofactor is FMN. NADPH serves as cofactor. Requires Mg(2+) as cofactor.

The protein localises to the cytoplasm. The catalysed reaction is isopentenyl diphosphate = dimethylallyl diphosphate. Functionally, involved in the biosynthesis of isoprenoids. Catalyzes the 1,3-allylic rearrangement of the homoallylic substrate isopentenyl (IPP) to its allylic isomer, dimethylallyl diphosphate (DMAPP). The sequence is that of Isopentenyl-diphosphate delta-isomerase from Chlorobaculum parvum (strain DSM 263 / NCIMB 8327) (Chlorobium vibrioforme subsp. thiosulfatophilum).